A 338-amino-acid chain; its full sequence is D-erythrose-4-phosphate dehydrogenase (338 aa).

Residue 11-12 (RI) coordinates NAD(+). Substrate contacts are provided by residues 153-155 (SCT), Arg-199, 212-213 (TK), and Arg-235. Cys-154 functions as the Nucleophile in the catalytic mechanism. Asn-317 provides a ligand contact to NAD(+).

This sequence belongs to the glyceraldehyde-3-phosphate dehydrogenase family. Epd subfamily. Homotetramer.

It localises to the cytoplasm. It catalyses the reaction D-erythrose 4-phosphate + NAD(+) + H2O = 4-phospho-D-erythronate + NADH + 2 H(+). Its pathway is cofactor biosynthesis; pyridoxine 5'-phosphate biosynthesis; pyridoxine 5'-phosphate from D-erythrose 4-phosphate: step 1/5. Functionally, catalyzes the NAD-dependent conversion of D-erythrose 4-phosphate to 4-phosphoerythronate. This chain is D-erythrose-4-phosphate dehydrogenase, found in Shewanella putrefaciens (strain CN-32 / ATCC BAA-453).